Here is a 359-residue protein sequence, read N- to C-terminus: MMP endo-(1,4)-3-O-methyl-alpha-D-mannosidase (359 aa).

In terms of assembly, monomer in solution.

The catalysed reaction is Endohydrolysis of 3-O-methyl-alpha-D-mannosyl-(1-&gt;4)-3-O-methyl-D-mannose linkages within (1,4)-3-O-methyl-alpha-D-mannnan substrates.. In terms of biological role, hydrolase involved in the biosynthesis of 3-O-methylmannose polysaccharides (MMP), which are intracellular polymethylated polysaccharides implicated in the modulation of fatty acid metabolism in non-tuberculous mycobacteria. Highly specific hydrolase that catalyzes the internal cleavage of MMP. Is able to hydrolyze purified MMP into distinct lower order oligomannosides but does not cleave acylated or deacylated forms of 6-O-methylglucose lipopolysaccharide (MGLP), beta-mannans, synthetic 4alpha-oligomannosides or its own reaction products. Products were identified as four distinct oligomannosides differing in the number of mannose units (4 to 8) and methylation pattern (free or methylated C1-OH). Might serve as a recycling enzyme that hydrolyzes mature MMP into defined-size smaller oligomannosides that are, in turn, substrates for ManT and MeT1 activities for further processing into new daughter MMP chains. The sequence is that of MMP endo-(1,4)-3-O-methyl-alpha-D-mannosidase from Mycolicibacterium hassiacum (strain DSM 44199 / CIP 105218 / JCM 12690 / 3849) (Mycobacterium hassiacum).